The following is a 564-amino-acid chain: Dihydroxy-acid dehydratase (564 aa).

Cys-51 contacts [2Fe-2S] cluster. A Mg(2+)-binding site is contributed by Asp-83. A [2Fe-2S] cluster-binding site is contributed by Cys-124. The Mg(2+) site is built by Asp-125 and Lys-126. Position 126 is an N6-carboxylysine (Lys-126). Cys-196 contributes to the [2Fe-2S] cluster binding site. Glu-448 lines the Mg(2+) pocket. The active-site Proton acceptor is the Ser-474.

Belongs to the IlvD/Edd family. Homodimer. [2Fe-2S] cluster serves as cofactor. Requires Mg(2+) as cofactor.

The catalysed reaction is (2R)-2,3-dihydroxy-3-methylbutanoate = 3-methyl-2-oxobutanoate + H2O. It carries out the reaction (2R,3R)-2,3-dihydroxy-3-methylpentanoate = (S)-3-methyl-2-oxopentanoate + H2O. Its pathway is amino-acid biosynthesis; L-isoleucine biosynthesis; L-isoleucine from 2-oxobutanoate: step 3/4. The protein operates within amino-acid biosynthesis; L-valine biosynthesis; L-valine from pyruvate: step 3/4. Functions in the biosynthesis of branched-chain amino acids. Catalyzes the dehydration of (2R,3R)-2,3-dihydroxy-3-methylpentanoate (2,3-dihydroxy-3-methylvalerate) into 2-oxo-3-methylpentanoate (2-oxo-3-methylvalerate) and of (2R)-2,3-dihydroxy-3-methylbutanoate (2,3-dihydroxyisovalerate) into 2-oxo-3-methylbutanoate (2-oxoisovalerate), the penultimate precursor to L-isoleucine and L-valine, respectively. The protein is Dihydroxy-acid dehydratase of Polynucleobacter asymbioticus (strain DSM 18221 / CIP 109841 / QLW-P1DMWA-1) (Polynucleobacter necessarius subsp. asymbioticus).